The primary structure comprises 221 residues: Glutathione S-transferase class-mu 26 kDa isozyme 1 (221 aa).

The GST N-terminal domain maps to 2 to 82; sequence PAKLGYWKIR…YIADKHGMIG (81 aa). Residues 7-8, 40-44, 53-54, and 66-67 each bind glutathione; these read YW, WFSKK, NL, and QS. A GST C-terminal domain is found at 84-202; the sequence is TPEERARVSM…ESNRFIKWPL (119 aa). A substrate-binding site is contributed by Tyr-110.

The protein belongs to the GST superfamily. Mu family. Homodimer.

It carries out the reaction RX + glutathione = an S-substituted glutathione + a halide anion + H(+). Functionally, conjugation of reduced glutathione to a wide number of exogenous and endogenous hydrophobic electrophiles. GST isoenzymes appear to play a central role in the parasite detoxification system. Other functions are also suspected including a role in increasing the solubility of haematin in the parasite gut. This Fasciola hepatica (Liver fluke) protein is Glutathione S-transferase class-mu 26 kDa isozyme 1.